We begin with the raw amino-acid sequence, 429 residues long: Aspartate--tRNA(Asp/Asn) ligase (429 aa).

Glutamate 166 is an L-aspartate binding site. The segment at 188-191 is aspartate; it reads QLYK. Arginine 210 provides a ligand contact to L-aspartate. ATP is bound by residues 210 to 212, 218 to 220, and glutamate 352; these read RAE and RHL. Residues glutamate 352 and serine 355 each coordinate Mg(2+). L-aspartate is bound by residues serine 355 and arginine 359. 400–403 provides a ligand contact to ATP; that stretch reads GIER.

The protein belongs to the class-II aminoacyl-tRNA synthetase family. Type 2 subfamily. Homodimer. The cofactor is Mg(2+).

Its subcellular location is the cytoplasm. It catalyses the reaction tRNA(Asx) + L-aspartate + ATP = L-aspartyl-tRNA(Asx) + AMP + diphosphate. Functionally, aspartyl-tRNA synthetase with relaxed tRNA specificity since it is able to aspartylate not only its cognate tRNA(Asp) but also tRNA(Asn). Reaction proceeds in two steps: L-aspartate is first activated by ATP to form Asp-AMP and then transferred to the acceptor end of tRNA(Asp/Asn). The polypeptide is Aspartate--tRNA(Asp/Asn) ligase (Methanoculleus marisnigri (strain ATCC 35101 / DSM 1498 / JR1)).